Here is a 204-residue protein sequence, read N- to C-terminus: Large ribosomal subunit protein uL13 (204 aa).

Belongs to the universal ribosomal protein uL13 family.

The sequence is that of Large ribosomal subunit protein uL13 (RpL13A) from Choristoneura parallela (Spotted fireworm moth).